Reading from the N-terminus, the 466-residue chain is Asparagine--tRNA ligase (466 aa).

This sequence belongs to the class-II aminoacyl-tRNA synthetase family. As to quaternary structure, homodimer.

The protein localises to the cytoplasm. It catalyses the reaction tRNA(Asn) + L-asparagine + ATP = L-asparaginyl-tRNA(Asn) + AMP + diphosphate + H(+). This Salmonella choleraesuis (strain SC-B67) protein is Asparagine--tRNA ligase.